The primary structure comprises 152 residues: Transcriptional regulator MraZ (152 aa).

2 consecutive SpoVT-AbrB domains span residues 5-52 (ASAI…PIHE) and 81-124 (AHEV…DEQS).

Belongs to the MraZ family. As to quaternary structure, forms oligomers.

The protein localises to the cytoplasm. It localises to the nucleoid. The chain is Transcriptional regulator MraZ from Shewanella baltica (strain OS155 / ATCC BAA-1091).